A 188-amino-acid polypeptide reads, in one-letter code: Probable RNA 2'-phosphotransferase (188 aa).

The protein belongs to the KptA/TPT1 family.

Removes the 2'-phosphate from RNA via an intermediate in which the phosphate is ADP-ribosylated by NAD followed by a presumed transesterification to release the RNA and generate ADP-ribose 1''-2''-cyclic phosphate (APPR&gt;P). May function as an ADP-ribosylase. This is Probable RNA 2'-phosphotransferase from Pseudomonas savastanoi pv. phaseolicola (strain 1448A / Race 6) (Pseudomonas syringae pv. phaseolicola (strain 1448A / Race 6)).